We begin with the raw amino-acid sequence, 184 residues long: NADH-quinone oxidoreductase subunit B 1 (184 aa).

[4Fe-4S] cluster is bound by residues Cys-37, Cys-38, Cys-103, and Cys-132.

Belongs to the complex I 20 kDa subunit family. In terms of assembly, NDH-1 is composed of 14 different subunits. Subunits NuoB, C, D, E, F, and G constitute the peripheral sector of the complex. Requires [4Fe-4S] cluster as cofactor.

The protein resides in the cell membrane. The catalysed reaction is a quinone + NADH + 5 H(+)(in) = a quinol + NAD(+) + 4 H(+)(out). In terms of biological role, NDH-1 shuttles electrons from NADH, via FMN and iron-sulfur (Fe-S) centers, to quinones in the respiratory chain. The immediate electron acceptor for the enzyme in this species is believed to be a menaquinone. Couples the redox reaction to proton translocation (for every two electrons transferred, four hydrogen ions are translocated across the cytoplasmic membrane), and thus conserves the redox energy in a proton gradient. This chain is NADH-quinone oxidoreductase subunit B 1, found in Streptomyces coelicolor (strain ATCC BAA-471 / A3(2) / M145).